A 108-amino-acid polypeptide reads, in one-letter code: Insertion element IS6110 uncharacterized 12.0 kDa protein (108 aa).

This sequence belongs to the transposase 8 family.

In Mycobacterium bovis (strain ATCC BAA-935 / AF2122/97), this protein is Insertion element IS6110 uncharacterized 12.0 kDa protein.